An 856-amino-acid polypeptide reads, in one-letter code: Histone-lysine N-methyltransferase EZA1 (856 aa).

The segment covering 1 to 11 (MVTDDSNSSGR) has biased composition (polar residues). Disordered regions lie at residues 1–34 (MVTDDSNSSGRIKSHVDDDDDGEEEEDRLEGLEN), 66–87 (VSPFSSAASSRATAEDNGNSNM), and 366–473 (NVDS…HHGS). The span at 17-28 (DDDDDGEEEEDR) shows a compositional bias: acidic residues. The stretch at 22–49 (GEEEEDRLEGLENRLSELKRKIQGERVR) forms a coiled coil. Residues 68–87 (PFSSAASSRATAEDNGNSNM) show a composition bias toward polar residues. Residues 374–392 (EQEHGIRGKREVPILKDSN) show a composition bias toward basic and acidic residues. Residues 393–419 (DLPNLSNKKQKTAASDTKMSFVNSVPS) show a composition bias toward polar residues. Over residues 438-451 (KVNRDSEADAKEVG) the composition is skewed to basic and acidic residues. In terms of domain architecture, SANT spans 489-539 (PSTEWNPIEKDLYLKGVEIFGRNSCLIARNLLSGLKTCLDVSNYMRENEVS). A CXC domain is found at 594–693 (WKRIAGGKNQ…SLGEAPRRGE (100 aa)). Positions 707–822 (QRILLGKSDV…ASEELFYDYR (116 aa)) constitute an SET domain. Tyrosine 821 is a binding site for S-adenosyl-L-methionine. The interval 827 to 856 (QAPVWARKPEGSKKDDSAITHRRARKHQSH) is disordered. Basic and acidic residues predominate over residues 833-845 (RKPEGSKKDDSAI). Positions 838-845 (SKKDDSAI) match the Nuclear localization signal motif. Basic residues predominate over residues 846-856 (THRRARKHQSH).

This sequence belongs to the class V-like SAM-binding methyltransferase superfamily. Histone-lysine methyltransferase family. EZ subfamily. In terms of assembly, component of the plant homeodomain / polycomb repressive complex 2 (PHD-PRC2) large complex during prolonged cold, composed of core PRC2 components (VRN2, EZA1, FIE and MSI1), and three related PHD finger proteins (VIL1, VIL2 and VIN3) that mediates histone H3 trimethylation on 'Lys-27' H3K27me3. Interacts with TAF13. Interacts with EOL1. Interacts (via SANT domain) with HXK1 in the nucleus.

The protein resides in the nucleus. The enzyme catalyses L-lysyl(27)-[histone H3] + 3 S-adenosyl-L-methionine = N(6),N(6),N(6)-trimethyl-L-lysyl(27)-[histone H3] + 3 S-adenosyl-L-homocysteine + 3 H(+). Functionally, polycomb group (PcG) protein. Catalytic subunit of some PcG multiprotein complex, which methylates 'Lys-27' of histone H3, leading to transcriptional repression of the affected target genes, mainly abscisic acid (ABA) responsive elements. PcG proteins act by forming multiprotein complexes, which are required to maintain the transcriptionally repressive state of homeotic genes throughout development. PcG proteins are not required to initiate repression, but to maintain it during later stages of development. Forms a nuclear complex with CLF and HXK1 to target common glucose-responsive genes and regulate glucose signaling by glucose-mediated gene repression. Affects the recruitment of HXK1 to the target chromatin. The sequence is that of Histone-lysine N-methyltransferase EZA1 from Arabidopsis thaliana (Mouse-ear cress).